Consider the following 754-residue polypeptide: MTILTHTLGFPRVGLRRELKKAQESYWAGNSTREALLAVGRELRARHWEQQKQAGIDLLPVGDFAWYDHVLTTSLLLGNVPARHQNNDGSVDIDTLFRIGRGRAPTGEPAAAAEMTKWFNTNYHYIVPEFSKGQQFRLTWTQLLEEVDEALALGHKIKPVLLGPVTYLWLGKVKGEPFDRLTLLKDILPVYQHVLAELAKRGIEWVQIDEPALVLELPQAWLDAFKPAYDALAGQVKLLLTTYFEGVTPNLDTIIALPVQGLHVDLIHGKDDVAELHQRLPVDWLLSAGLINGRNVWRADLTEKYAQINALVGKRALWVASSCSLLHSPIDLSVETRLDTEVKSWFAFALQKCGELALLRDALNSGETAALEEWSAPIQARRHSRRVHNAAVEKRLAAITAQDSQRENPYEVRAEAQRARFKLPAWPTTTIGSFPQTTEIRGLRLDFKKGNLDANNYRTGIAEHIKQAIIEQERLGLDVLVHGEAERNDMVEYFGEHLDGFVFTQNGWVQSYGSRCVKPPVVIGDISRPAPITVEWAKYAQSLTDKPVKGMLTGPVTILCWSFPREDVTRETIAKQIALALRDEVADLEAAGIGIIQIDEPALREGLPLRRSDWDAYLEWGVEAFRINAAVAKDETQIHTHMCYCEFNDIMDSIAALDADVITIETSRSDMELLESFEAFDYPNEIGPGVYDIHSPNVPSVEWIEALLKKAAQRIPAQRLWVNPDCGLKTRGWPETRAALANMVKAAHNLRQAK.

5-methyltetrahydropteroyltri-L-glutamate-binding positions include 17–20 (RELK) and Lys117. L-homocysteine contacts are provided by residues 431 to 433 (IGS) and Glu484. L-methionine contacts are provided by residues 431-433 (IGS) and Glu484. 5-methyltetrahydropteroyltri-L-glutamate is bound by residues 515-516 (RC) and Trp561. An L-homocysteine-binding site is contributed by Asp599. An L-methionine-binding site is contributed by Asp599. Residue Glu605 participates in 5-methyltetrahydropteroyltri-L-glutamate binding. Residues His641, Cys643, and Glu665 each contribute to the Zn(2+) site. Residue His694 is the Proton donor of the active site. A Zn(2+)-binding site is contributed by Cys726.

It belongs to the vitamin-B12 independent methionine synthase family. It depends on Zn(2+) as a cofactor.

It catalyses the reaction 5-methyltetrahydropteroyltri-L-glutamate + L-homocysteine = tetrahydropteroyltri-L-glutamate + L-methionine. The protein operates within amino-acid biosynthesis; L-methionine biosynthesis via de novo pathway; L-methionine from L-homocysteine (MetE route): step 1/1. Functionally, catalyzes the transfer of a methyl group from 5-methyltetrahydrofolate to homocysteine resulting in methionine formation. This is 5-methyltetrahydropteroyltriglutamate--homocysteine methyltransferase from Salmonella agona (strain SL483).